Consider the following 336-residue polypeptide: tRNA N6-adenosine threonylcarbamoyltransferase (336 aa).

Fe cation contacts are provided by H114 and H118. Substrate contacts are provided by residues 136–140 (LVSGG), D169, G182, D186, and N275. D301 provides a ligand contact to Fe cation.

The protein belongs to the KAE1 / TsaD family. It depends on Fe(2+) as a cofactor.

The protein localises to the cytoplasm. It catalyses the reaction L-threonylcarbamoyladenylate + adenosine(37) in tRNA = N(6)-L-threonylcarbamoyladenosine(37) in tRNA + AMP + H(+). Required for the formation of a threonylcarbamoyl group on adenosine at position 37 (t(6)A37) in tRNAs that read codons beginning with adenine. Is involved in the transfer of the threonylcarbamoyl moiety of threonylcarbamoyl-AMP (TC-AMP) to the N6 group of A37, together with TsaE and TsaB. TsaD likely plays a direct catalytic role in this reaction. The polypeptide is tRNA N6-adenosine threonylcarbamoyltransferase (Streptococcus pneumoniae (strain JJA)).